We begin with the raw amino-acid sequence, 412 residues long: MVMRSWPAPTVVALPDHGGPLSVHDTVTGSRRTITPGATARMYVCGITPYDAAHLGHAFTYLTFDLVNRVWRDAGHTVDYVQNITDIDDPLLERAAATGQDWQELAAREIQVFREDMAALRILPPRAFLGVVESMDLIADFVARLRAQGVTYEVDGDIYFSAADAPGFGSLSQLDRTAMLELFAERGGDPGRAGKKDPLDWLLWRAERPGEPAWDTPLGRGRPGWHVECSAISVHELGMGFDLNGGGDDLIFPHHEMGAAEACCATGSRPQARHYLHVAMVGLDGEKMSKSRGNLVFVSQLRKAGTDPMAIRLALLAHHYRTAWEWTDADLRTAEQRLERWRAAAAVENAPDARPLLARVRSALADDLDTATALAAVDEWADAALSGSGDDPDAPALMRTTVDTLLGVALDR.

Cys45 is a Zn(2+) binding site. L-cysteinyl-5'-AMP-binding positions include Cys45–Thr48, Thr60, and Asn83–Thr85. Residues Ile47–His57 carry the 'HIGH' region motif. The short motif at Glu185–Pro190 is the 'ERGGDP' region element. L-cysteinyl-5'-AMP is bound at residue Trp225. Residue Cys229 participates in Zn(2+) binding. Gly247–Asp249 provides a ligand contact to L-cysteinyl-5'-AMP. His254 lines the Zn(2+) pocket. Position 281 (Val281) interacts with L-cysteinyl-5'-AMP. Positions Lys287–Ser291 match the 'KMSKS' region motif.

This sequence belongs to the class-I aminoacyl-tRNA synthetase family. MshC subfamily. Monomer. Zn(2+) serves as cofactor.

It catalyses the reaction 1D-myo-inositol 2-amino-2-deoxy-alpha-D-glucopyranoside + L-cysteine + ATP = 1D-myo-inositol 2-(L-cysteinylamino)-2-deoxy-alpha-D-glucopyranoside + AMP + diphosphate + H(+). Its function is as follows. Catalyzes the ATP-dependent condensation of GlcN-Ins and L-cysteine to form L-Cys-GlcN-Ins. The polypeptide is L-cysteine:1D-myo-inositol 2-amino-2-deoxy-alpha-D-glucopyranoside ligase (Thermobifida fusca (strain YX)).